Reading from the N-terminus, the 886-residue chain is CRM-domain containing factor CFM3, chloroplastic/mitochondrial (886 aa).

The N-terminal 70 residues, 1-70 (MAAAAMAISP…LDLRPEPSPS (70 aa)), are a transit peptide targeting the chloroplast and mitochondrion. 2 disordered regions span residues 56–84 (RPAS…TSRS) and 269–291 (TKGT…PPGH). CRM domains are found at residues 174-270 (LTLP…EPTK), 378-475 (PSLS…ELAE), and 590-690 (ETIT…SKLR). A compositionally biased stretch (polar residues) spans 270–281 (KGTSKNTQTLGM). Residues 771–886 (SFDNSVAVQN…QSTELTNTCS (116 aa)) are disordered. Residues 793 to 827 (NSDDEGDYSDEDDDEDDDNDEEDGFDYENDDEDDV) are compositionally biased toward acidic residues. Polar residues-rich tracts occupy residues 841–852 (DFGSSDSENYVS) and 869–886 (DSRN…NTCS).

In terms of assembly, interacts with RNA. Part of large ribonucleo-protein particles that contain CAF1 and/or CAF2, and RNC1.

The protein localises to the plastid. Its subcellular location is the chloroplast. It is found in the mitochondrion. Functionally, binds specific group II introns in chloroplasts and facilitates their splicing. Acts on subgroup IIB introns. The substrates of the subgroup IIB also require the CRM domain proteins CAF1 or CAF2, with a simultaneous binding of CFM3 and CAF1 or CAF2. May influence the biogenesis of the mitochondrial small ribosomal subunit. The chain is CRM-domain containing factor CFM3, chloroplastic/mitochondrial from Oryza sativa subsp. japonica (Rice).